Reading from the N-terminus, the 156-residue chain is DNA gyrase inhibitor (156 aa).

Belongs to the DNA gyrase inhibitor family. In terms of assembly, interacts with DNA gyrase.

The protein localises to the cytoplasm. Inhibits the supercoiling activity of DNA gyrase. Acts by inhibiting DNA gyrase at an early step, prior to (or at the step of) binding of DNA by the gyrase. It protects cells against toxins that target DNA gyrase, by inhibiting activity of these toxins and reducing the formation of lethal double-strand breaks in the cell. The polypeptide is DNA gyrase inhibitor (Serratia proteamaculans (strain 568)).